A 334-amino-acid polypeptide reads, in one-letter code: Ribosomal lysine N-methyltransferase 5 (334 aa).

S-adenosyl-L-methionine-binding positions include W88, 155-157 (GAG), D177, W227, and M254.

Belongs to the class I-like SAM-binding methyltransferase superfamily. RKM5 family.

S-adenosyl-L-methionine-dependent protein-lysine N-methyltransferase that methylates 60S ribosomal protein L1. This chain is Ribosomal lysine N-methyltransferase 5 (RKM5), found in Lachancea thermotolerans (strain ATCC 56472 / CBS 6340 / NRRL Y-8284) (Yeast).